Here is a 217-residue protein sequence, read N- to C-terminus: ATP phosphoribosyltransferase (217 aa).

Belongs to the ATP phosphoribosyltransferase family. Short subfamily. Heteromultimer composed of HisG and HisZ subunits.

The protein localises to the cytoplasm. The enzyme catalyses 1-(5-phospho-beta-D-ribosyl)-ATP + diphosphate = 5-phospho-alpha-D-ribose 1-diphosphate + ATP. The protein operates within amino-acid biosynthesis; L-histidine biosynthesis; L-histidine from 5-phospho-alpha-D-ribose 1-diphosphate: step 1/9. Its function is as follows. Catalyzes the condensation of ATP and 5-phosphoribose 1-diphosphate to form N'-(5'-phosphoribosyl)-ATP (PR-ATP). Has a crucial role in the pathway because the rate of histidine biosynthesis seems to be controlled primarily by regulation of HisG enzymatic activity. The polypeptide is ATP phosphoribosyltransferase (Burkholderia multivorans (strain ATCC 17616 / 249)).